The primary structure comprises 826 residues: Hyaluronate lyase HylA (826 aa).

Residues 1–36 constitute a signal peptide (tat-type signal); sequence MFDIPYQVPSRRTFLSLSALSAIAIAASPEMPDAFA. Active-site residues include histidine 276, tyrosine 285, and arginine 339. Residues 800-826 are disordered; sequence LSPALPKPTKPSLRASSYPLGLPHTSS.

The protein belongs to the polysaccharide lyase 8 family. Post-translationally, predicted to be exported by the Tat system. The position of the signal peptide cleavage has not been experimentally proven.

Its subcellular location is the secreted. The enzyme catalyses [hyaluronan](n) = n 3-(4-deoxy-beta-D-gluc-4-enuronosyl)-N-acetyl-D-glucosamine + H2O. Functionally, degrades hyaluronic acid (HA) into large-sized HA oligosaccharides, including tetrasaccharide HA (HA-4), hexasaccharide HA (HA-6) and higher molecular weight HA, and to a lesser extent into HA disaccharides (HA-2). Involved in the pathogenesis of acne. HA degradation products induce secretion of proinflammatory cytokines (IL-6, IL-8 and TNF-alpha) from human HaCaT keratinocyte cell line and from mouse bone marrow derived macrophages (BMDMs). Produced HA fragments also direct robust TLR2-dependent inflammation in the mouse model of acne. This is Hyaluronate lyase HylA from Cutibacterium acnes (Propionibacterium acnes).